The sequence spans 170 residues: Protein SprT (170 aa).

The SprT-like domain occupies 22-163; it reads LQQANLTLQT…RCRRCGKTLR (142 aa). His78 contributes to the Zn(2+) binding site. Residue Glu79 is part of the active site. His82 is a Zn(2+) binding site.

The protein belongs to the SprT family. Requires Zn(2+) as cofactor.

The protein resides in the cytoplasm. The chain is Protein SprT from Pectobacterium carotovorum subsp. carotovorum (strain PC1).